Consider the following 239-residue polypeptide: Putative CCR4-associated factor 1 homolog 8 (239 aa).

Positions 17, 19, 133, and 204 each coordinate a divalent metal cation.

The protein belongs to the CAF1 family. In terms of assembly, component of the CCR4-NOT complex, at least composed of CRR4 and CAF1 proteins. It depends on a divalent metal cation as a cofactor.

It localises to the nucleus. Its subcellular location is the cytoplasm. The enzyme catalyses Exonucleolytic cleavage of poly(A) to 5'-AMP.. Ubiquitous transcription factor required for a diverse set of processes. It is a component of the CCR4 complex involved in the control of gene expression. This chain is Putative CCR4-associated factor 1 homolog 8 (CAF1-8), found in Arabidopsis thaliana (Mouse-ear cress).